An 86-amino-acid polypeptide reads, in one-letter code: Large ribosomal subunit protein eL20 (86 aa).

Belongs to the eukaryotic ribosomal protein eL20 family. In terms of assembly, part of the 50S ribosomal subunit. Binds 23S rRNA.

The chain is Large ribosomal subunit protein eL20 from Metallosphaera sedula (strain ATCC 51363 / DSM 5348 / JCM 9185 / NBRC 15509 / TH2).